The chain runs to 698 residues: 4-hydroxybutyrate--CoA ligase [ADP-forming] (698 aa).

Positions 491–544 constitute an ATP-grasp domain; it reads QEVLKAYGLPLPKSTLAKNEAEAVKAAKKIGYPVVMKIASPQIIHKSDAGGVKV. 517-544 is a binding site for ATP; sequence AKKIGYPVVMKIASPQIIHKSDAGGVKV.

In the N-terminal section; belongs to the acetate CoA ligase alpha subunit family. This sequence in the C-terminal section; belongs to the acetate CoA ligase beta subunit family. Mg(2+) is required as a cofactor. Mn(2+) serves as cofactor.

The enzyme catalyses 4-hydroxybutanoate + ATP + CoA = 4-hydroxybutanoyl-CoA + ADP + phosphate. Involved in thaumarchaeal hydroxypropionate/hydroxybutyrate (HP/HB) cycle, a modified version of the autotrophic HP/HB cycle of Crenarchaeota. Catalyzes the formation of 4-hydroxybutyryl-CoA, ADP and phosphate from 4-hydroxybutyrate, coenzyme A (CoA) and ATP. Can also use acetate, propionate and butyrate, with poor catalytic efficiency. This Nitrosopumilus maritimus (strain SCM1) protein is 4-hydroxybutyrate--CoA ligase [ADP-forming].